The sequence spans 303 residues: ATP synthase gamma chain (303 aa).

It belongs to the ATPase gamma chain family. F-type ATPases have 2 components, CF(1) - the catalytic core - and CF(0) - the membrane proton channel. CF(1) has five subunits: alpha(3), beta(3), gamma(1), delta(1), epsilon(1). CF(0) has three main subunits: a, b and c.

It is found in the cell membrane. In terms of biological role, produces ATP from ADP in the presence of a proton gradient across the membrane. The gamma chain is believed to be important in regulating ATPase activity and the flow of protons through the CF(0) complex. The protein is ATP synthase gamma chain of Oenococcus oeni (strain ATCC BAA-331 / PSU-1).